The sequence spans 302 residues: MDEYTKIEKIGEGTYGVVYKGRHKATGQVVAMKKIRLENEEEGVPSTAIREISLLKELQHPNIVCLLDVLMQDSRLYLIFEFLSMDLKKYLDSIPSGQYIDTMLVKSYLYQILQGIVFCHSRRVLHRDLKPQNLLIDNKGVIKLADFGLARAFGIPVRVYTHEVVTLWYRASEVLLGSVRYSTPVDVWSVGTIFAEIATKKPLFHGDSEIDQLFRIFRSLGTPNNEVWPEVESLQDYKNTFPKWKGGSLSSNVKNIDEDGLDLLSKMLVYDPAKRISARKAMLHPYFDDLDKSSLPANQIRN.

A Protein kinase domain is found at 4–287 (YTKIEKIGEG…ARKAMLHPYF (284 aa)). Residues 10-18 (IGEGTYGVV) and K33 each bind ATP. T14 is subject to Phosphothreonine. Y15 carries the phosphotyrosine; by wee1 and wee2 modification. D128 acts as the Proton acceptor in catalysis. T161 is subject to Phosphothreonine; by cak. The residue at position 277 (S277) is a Phosphoserine.

The protein belongs to the protein kinase superfamily. CMGC Ser/Thr protein kinase family. CDC2/CDKX subfamily. In terms of assembly, forms a stable but non-covalent complex with a regulatory subunit and with a cyclin. Interacts with spdya. Post-translationally, phosphorylation at Tyr-15 by wee1 and wee2 inhibits the protein kinase activity and acts negative regulator of entry into mitosis (G2 to M transition).

It is found in the nucleus. The enzyme catalyses L-seryl-[protein] + ATP = O-phospho-L-seryl-[protein] + ADP + H(+). It carries out the reaction L-threonyl-[protein] + ATP = O-phospho-L-threonyl-[protein] + ADP + H(+). It catalyses the reaction [DNA-directed RNA polymerase] + ATP = phospho-[DNA-directed RNA polymerase] + ADP + H(+). Its activity is regulated as follows. Phosphorylation at Thr-14 or Tyr-15 inactivates the enzyme, while phosphorylation at Thr-161 activates it. In terms of biological role, plays a key role in the control of the eukaryotic cell cycle by modulating the centrosome cycle as well as mitotic onset; promotes G2-M transition via association with multiple interphase cyclins. During G2 and early mitosis, CDC25A/B/C-mediated dephosphorylation activates CDK1/cyclin complexes which phosphorylate several substrates that trigger at least centrosome separation, Golgi dynamics, nuclear envelope breakdown and chromosome condensation. Once chromosomes are condensed and aligned at the metaphase plate, CDK1 activity is switched off by WEE1- and PKMYT1-mediated phosphorylation to allow sister chromatid separation, chromosome decondensation, reformation of the nuclear envelope and cytokinesis. Catalyzes lamin (LMNA, LMNB1 and LMNB2) phosphorylation at the onset of mitosis, promoting nuclear envelope breakdown. This Xenopus laevis (African clawed frog) protein is Cyclin-dependent kinase 1-B (cdk1-b).